Consider the following 551-residue polypeptide: Protein GPR107 (551 aa).

Positions Met-1–Gly-33 are cleaved as a signal peptide. Residues Arg-34 to Pro-262 lie on the Extracellular side of the membrane. Asn-64 is a glycosylation site (N-linked (GlcNAc...) asparagine). Residues Gly-127–Val-183 are disordered. Residues Ser-153–Pro-164 are compositionally biased toward polar residues. A glycan (N-linked (GlcNAc...) asparagine) is linked at Asn-209. Residues Lys-263–Leu-283 traverse the membrane as a helical segment. The Cytoplasmic segment spans residues Arg-284–Lys-292. A helical transmembrane segment spans residues Ile-293–Ile-313. The Extracellular portion of the chain corresponds to Asp-314 to His-336. Residues Leu-337–Ile-357 traverse the membrane as a helical segment. Residues Lys-358–Lys-367 lie on the Cytoplasmic side of the membrane. A helical membrane pass occupies residues Ile-368–Ser-388. The Extracellular segment spans residues Thr-389–Asp-401. A helical transmembrane segment spans residues Ser-402–Ile-422. The Cytoplasmic portion of the chain corresponds to Arg-423 to Lys-443. Residues Leu-444–Leu-466 form a helical membrane-spanning segment. Topologically, residues Lys-467 to Lys-475 are extracellular. The chain crosses the membrane as a helical span at residues Trp-476–Tyr-495. Residues Lys-496 to Ala-551 are Cytoplasmic-facing.

It belongs to the LU7TM family. Cleaved by FURIN to yield two fragments that remain associated via a disulfide bond. As to expression, widely expressed. Not detected in the duodenum, nor in the exocrine pancreas.

Its subcellular location is the cell membrane. The protein localises to the golgi apparatus. The protein resides in the trans-Golgi network membrane. Functionally, has been proposed to act as a receptor for neuronostatin, a peptide derived from the somatostatin/SST precursor. Involved in blood sugar regulation through the induction of glucagon in response to low glucose. The sequence is that of Protein GPR107 (Gpr107) from Rattus norvegicus (Rat).